The sequence spans 344 residues: Flavonoid 7-O-methyltransferase 1A (344 aa).

D211 serves as a coordination point for S-adenosyl-L-methionine. The Proton acceptor role is filled by H249.

Belongs to the class I-like SAM-binding methyltransferase superfamily. Cation-independent O-methyltransferase family. In terms of assembly, homodimer.

The enzyme catalyses apigenin + S-adenosyl-L-methionine = genkwanin + S-adenosyl-L-homocysteine + H(+). The catalysed reaction is luteolin + S-adenosyl-L-methionine = luteolin 7-methyl ether + S-adenosyl-L-homocysteine + H(+). It catalyses the reaction quercetin + S-adenosyl-L-methionine = rhamnetin + S-adenosyl-L-homocysteine + H(+). It carries out the reaction (2S)-naringenin + S-adenosyl-L-methionine = (2S)-sakuranetin + S-adenosyl-L-homocysteine + H(+). The enzyme catalyses kaempferol + S-adenosyl-L-methionine = kaempferol 7-methyl ether + S-adenosyl-L-homocysteine + H(+). The catalysed reaction is isorhamnetin + S-adenosyl-L-methionine = rhamnacene + S-adenosyl-L-homocysteine + H(+). It catalyses the reaction 4',7,8-trihydroxyflavone + S-adenosyl-L-methionine = 4',8-dihydroxy-7-methoxyflavone + S-adenosyl-L-homocysteine. It carries out the reaction scutellarein + S-adenosyl-L-methionine = scutellarein 7-methyl ether + S-adenosyl-L-homocysteine. It participates in flavonoid metabolism. Its function is as follows. Flavonoid 7-O-methyltransferase involved in the biosynthesis of polymethoxylated flavonoids natural products such as pebrellin, aroma compounds which contribute to the flavor of peppermint, and exhibit pharmacological activities such as anti-allergic, anti-oxidant, antibacterial, anti-proliferative, and anti-inflammatory effects. Catalyzes S-adenosylmethionine-dependent regioselective 7-O-methylation of flavonoids; active on various hydroxylated flavonoid substrates, including luteolin (LUT), quercetin, kaempferol, isorhamnetin, apigenin (API), scutellarein (6-hydroxy-apigenin, 6-OH-API, SCU), 7,8,4'-trihydroxy-flavone and naringenin (NAR), and, with a lower efficiency, 7,8,3',4'-tetrahydroxy-flavone, taxifolin, hesperetin and genistein. In Mentha piperita (Peppermint), this protein is Flavonoid 7-O-methyltransferase 1A.